The sequence spans 96 residues: MYAVIETGSKQYLVKEGDVLKVEKLPFGENEEIELPALNIVKDGTVKFGGKVKAKVLSTAKDKKVLIFKHLPKKHSKKLRGHRQFYTKISILSIGE.

Belongs to the bacterial ribosomal protein bL21 family. In terms of assembly, part of the 50S ribosomal subunit. Contacts protein L20.

Its function is as follows. This protein binds to 23S rRNA in the presence of protein L20. The protein is Large ribosomal subunit protein bL21 of Hydrogenobaculum sp. (strain Y04AAS1).